The following is a 309-amino-acid chain: Protein FdhE (309 aa).

This sequence belongs to the FdhE family.

Its subcellular location is the cytoplasm. Necessary for formate dehydrogenase activity. This chain is Protein FdhE, found in Escherichia coli (strain SMS-3-5 / SECEC).